The primary structure comprises 434 residues: Enolase (434 aa).

Q165 is a (2R)-2-phosphoglycerate binding site. The Proton donor role is filled by E207. The Mg(2+) site is built by D244, E291, and D318. K343, R372, S373, and K394 together coordinate (2R)-2-phosphoglycerate. K343 functions as the Proton acceptor in the catalytic mechanism.

Belongs to the enolase family. Mg(2+) is required as a cofactor.

It is found in the cytoplasm. It localises to the secreted. The protein resides in the cell surface. It carries out the reaction (2R)-2-phosphoglycerate = phosphoenolpyruvate + H2O. Its pathway is carbohydrate degradation; glycolysis; pyruvate from D-glyceraldehyde 3-phosphate: step 4/5. Functionally, catalyzes the reversible conversion of 2-phosphoglycerate (2-PG) into phosphoenolpyruvate (PEP). It is essential for the degradation of carbohydrates via glycolysis. The protein is Enolase of Macrococcus caseolyticus (strain JCSC5402) (Macrococcoides caseolyticum).